Here is a 376-residue protein sequence, read N- to C-terminus: Putative MSV199 domain-containing protein 468L (376 aa).

The stretch at 178–261 (QKREKETMSR…VNTVQKKLDI (84 aa)) forms a coiled coil.

This Invertebrate iridescent virus 6 (IIV-6) protein is Putative MSV199 domain-containing protein 468L.